Consider the following 401-residue polypeptide: Argininosuccinate synthase (401 aa).

Residues 10 to 18 and Ala-38 each bind ATP; that span reads AYSGGVDTS. Tyr-89 lines the L-citrulline pocket. Position 119 (Gly-119) interacts with ATP. Residues Thr-121, Asn-125, and Asp-126 each coordinate L-aspartate. An L-citrulline-binding site is contributed by Asn-125. L-citrulline-binding residues include Arg-129, Ser-177, Ser-186, Glu-262, and Tyr-274.

The protein belongs to the argininosuccinate synthase family. Type 1 subfamily. As to quaternary structure, homotetramer.

It is found in the cytoplasm. The enzyme catalyses L-citrulline + L-aspartate + ATP = 2-(N(omega)-L-arginino)succinate + AMP + diphosphate + H(+). It functions in the pathway amino-acid biosynthesis; L-arginine biosynthesis; L-arginine from L-ornithine and carbamoyl phosphate: step 2/3. The chain is Argininosuccinate synthase from Synechococcus sp. (strain CC9311).